An 82-amino-acid polypeptide reads, in one-letter code: Cortexin-1 (82 aa).

A disordered region spans residues M1–V20. A helical transmembrane segment spans residues T30–V50.

Belongs to the cortexin family. As to expression, neuron specific.

Its subcellular location is the membrane. May mediate extracellular or intracellular signaling of cortical neurons during forebrain development. This Rattus norvegicus (Rat) protein is Cortexin-1 (Ctxn1).